The following is a 266-amino-acid chain: Biotin--[acetyl-CoA-carboxylase] ligase (266 aa).

The BPL/LPL catalytic domain maps to 14–202; it reads RSLRDQLIGA…ELEARIIQWR (189 aa). Biotin is bound by residues 38–39, Q63, R67, and K138; that span reads ST.

The protein belongs to the biotin--protein ligase family. In terms of assembly, monomer in solution. Forms dimers under specific crystallization conditions.

The catalysed reaction is biotin + L-lysyl-[protein] + ATP = N(6)-biotinyl-L-lysyl-[protein] + AMP + diphosphate + H(+). It catalyses the reaction biotin + ATP + H(+) = biotinyl-5'-AMP + diphosphate. It carries out the reaction biotinyl-5'-AMP + L-lysyl-[protein] = N(6)-biotinyl-L-lysyl-[protein] + AMP + 2 H(+). Its activity is regulated as follows. Binding of biotin and ATP significantly increases the thermal stability of BirA and leads to the formation of a high affinity holoenzyme complex. In terms of biological role, catalyzes the transfer of biotin onto a conserved lysine residue of the biotin carboxyl carrier protein (BCCP) domain of acetyl-CoA carboxylase and converts it to active holo-BCCP. Forms an acyl-adenylate intermediate. Cannot use GTP or desthiobiotin. In Mycobacterium tuberculosis (strain ATCC 25618 / H37Rv), this protein is Biotin--[acetyl-CoA-carboxylase] ligase.